The following is a 349-amino-acid chain: 4-hydroxy-2-oxovalerate aldolase 1 (349 aa).

A Pyruvate carboxyltransferase domain is found at 9 to 261; that stretch reads ITVHDMTLRD…ATGVDVFRIQ (253 aa). Substrate is bound at residue 17-18; that stretch reads RD. D18 contacts Mn(2+). The active-site Proton acceptor is H21. Positions 171 and 200 each coordinate substrate. Residues H200 and H202 each contribute to the Mn(2+) site. Y291 is a binding site for substrate.

This sequence belongs to the 4-hydroxy-2-oxovalerate aldolase family.

The enzyme catalyses (S)-4-hydroxy-2-oxopentanoate = acetaldehyde + pyruvate. The protein is 4-hydroxy-2-oxovalerate aldolase 1 of Methylibium petroleiphilum (strain ATCC BAA-1232 / LMG 22953 / PM1).